A 463-amino-acid chain; its full sequence is Perilipin-5 (463 aa).

The interval 1 to 108 (MSEEEAAQIP…KLEEKLPFLQ (108 aa)) is interaction with LIPE. The tract at residues 1–173 (MSEEEAAQIP…HFLPMTEEEL (173 aa)) is essential for lipid droplet targeting. 3 positions are modified to phosphoserine: S2, S148, and S322. The tract at residues 185 to 463 (VGSVEDQRRQ…KHTLMPELDF (279 aa)) is interaction with PNPLA2 and ABHD5. The interval 444–463 (QEPETPSCPVKHTLMPELDF) is recruits mitochondria at the lipid droplet surface.

The protein belongs to the perilipin family. Homooligomer. Interacts with PNPLA2; prevents interaction of PNPLA2 with ABHD5. Interacts with ABHD5; targets ABHD5 to lipid droplets and promotes interaction of ABHD5 with PNPLA2. Interacts with LIPE. In terms of processing, phosphorylated by PKA. Phosphorylated on serine in skeletal muscle at rest or upon lipolytic stimulation. In terms of tissue distribution, expressed in skeletal muscle, liver, heart and kidney.

It localises to the lipid droplet. The protein localises to the cytoplasm. The protein resides in the mitochondrion. In terms of biological role, lipid droplet-associated protein that maintains the balance between lipogenesis and lipolysis and also regulates fatty acid oxidation in oxidative tissues. Recruits mitochondria to the surface of lipid droplets and is involved in lipid droplet homeostasis by regulating both the storage of fatty acids in the form of triglycerides and the release of fatty acids for mitochondrial fatty acid oxidation. In lipid droplet triacylglycerol hydrolysis, plays a role as a scaffolding protein for three major key lipolytic players: ABHD5, PNPLA2 and LIPE. Reduces the triacylglycerol hydrolase activity of PNPLA2 by recruiting and sequestering PNPLA2 to lipid droplets. Phosphorylation by PKA enables lipolysis probably by promoting release of ABHD5 from the perilipin scaffold and by facilitating interaction of ABHD5 with PNPLA2. Also increases lipolysis through interaction with LIPE and upon PKA-mediated phosphorylation of LIPE. This is Perilipin-5 (PLIN5) from Homo sapiens (Human).